The primary structure comprises 320 residues: Ferrochelatase (320 aa).

The Fe cation site is built by histidine 194 and glutamate 275.

The protein belongs to the ferrochelatase family. In terms of assembly, monomer.

It localises to the cytoplasm. It catalyses the reaction heme b + 2 H(+) = protoporphyrin IX + Fe(2+). Its pathway is porphyrin-containing compound metabolism; protoheme biosynthesis; protoheme from protoporphyrin-IX: step 1/1. Catalyzes the ferrous insertion into protoporphyrin IX. This is Ferrochelatase from Escherichia coli O139:H28 (strain E24377A / ETEC).